A 542-amino-acid polypeptide reads, in one-letter code: CTP synthase (542 aa).

Residues 1-265 (MARYVFITGG…DSEVLSAFGI (265 aa)) are amidoligase domain. Ser13 is a CTP binding site. Residue Ser13 participates in UTP binding. An ATP-binding site is contributed by 14 to 19 (SLGKGI). Residue Tyr54 coordinates L-glutamine. Asp71 is a binding site for ATP. Mg(2+)-binding residues include Asp71 and Glu139. Residues 146-148 (DIE), 186-191 (KTKPTQ), and Lys222 contribute to the CTP site. Residues 186-191 (KTKPTQ) and Lys222 contribute to the UTP site. The Glutamine amidotransferase type-1 domain occupies 291-541 (TIAVVGKYTG…IEAAIEQSRL (251 aa)). Residue Gly353 participates in L-glutamine binding. Cys380 acts as the Nucleophile; for glutamine hydrolysis in catalysis. L-glutamine-binding positions include 381–384 (FGMQ), Glu404, and Arg469. Residues His514 and Glu516 contribute to the active site.

The protein belongs to the CTP synthase family. As to quaternary structure, homotetramer.

The enzyme catalyses UTP + L-glutamine + ATP + H2O = CTP + L-glutamate + ADP + phosphate + 2 H(+). The catalysed reaction is L-glutamine + H2O = L-glutamate + NH4(+). It carries out the reaction UTP + NH4(+) + ATP = CTP + ADP + phosphate + 2 H(+). The protein operates within pyrimidine metabolism; CTP biosynthesis via de novo pathway; CTP from UDP: step 2/2. With respect to regulation, allosterically activated by GTP, when glutamine is the substrate; GTP has no effect on the reaction when ammonia is the substrate. The allosteric effector GTP functions by stabilizing the protein conformation that binds the tetrahedral intermediate(s) formed during glutamine hydrolysis. Inhibited by the product CTP, via allosteric rather than competitive inhibition. Functionally, catalyzes the ATP-dependent amination of UTP to CTP with either L-glutamine or ammonia as the source of nitrogen. Regulates intracellular CTP levels through interactions with the four ribonucleotide triphosphates. The protein is CTP synthase of Brucella suis (strain ATCC 23445 / NCTC 10510).